The chain runs to 393 residues: Probable protein phosphatase 2C 68 (393 aa).

In terms of domain architecture, PPM-type phosphatase spans 56–359 (DFSIAVVQAN…DDITVVVIFI (304 aa)). Positions 87, 88, 291, and 350 each coordinate Mn(2+).

It belongs to the PP2C family. It depends on Mg(2+) as a cofactor. Requires Mn(2+) as cofactor.

The enzyme catalyses O-phospho-L-seryl-[protein] + H2O = L-seryl-[protein] + phosphate. It carries out the reaction O-phospho-L-threonyl-[protein] + H2O = L-threonyl-[protein] + phosphate. In terms of biological role, may dephosphorylate and repress plasma membrane H(+)-ATPases (PM H(+)-ATPases, e.g. AHA1 and AHA2), thus influencing negatively plant growth and fitness. This is Probable protein phosphatase 2C 68 from Arabidopsis thaliana (Mouse-ear cress).